The primary structure comprises 56 residues: Cytochrome b-c1 complex subunit 10 (56 aa).

Residues 1–12 lie on the Mitochondrial matrix side of the membrane; sequence MLTRFLGPRYRQ. Residues 13-35 form a helical membrane-spanning segment; it reads LARNWVPTASLWGAVGAVGLVWA. The Mitochondrial intermembrane portion of the chain corresponds to 36–56; the sequence is TDWRLILDWVPYINGKFKKDD.

Belongs to the UQCR11/QCR10 family. In terms of assembly, component of the ubiquinol-cytochrome c oxidoreductase (cytochrome b-c1 complex, complex III, CIII), a multisubunit enzyme composed of 11 subunits. The complex is composed of 3 respiratory subunits cytochrome b, cytochrome c1 and Rieske protein UQCRFS1, 2 core protein subunits UQCRC1/QCR1 and UQCRC2/QCR2, and 6 low-molecular weight protein subunits UQCRH/QCR6, UQCRB/QCR7, UQCRQ/QCR8, UQCR10/QCR9, UQCR11/QCR10 and subunit 9, the cleavage product of Rieske protein UQCRFS1. The complex exists as an obligatory dimer and forms supercomplexes (SCs) in the inner mitochondrial membrane with NADH-ubiquinone oxidoreductase (complex I, CI) and cytochrome c oxidase (complex IV, CIV), resulting in different assemblies (supercomplex SCI(1)III(2)IV(1) and megacomplex MCI(2)III(2)IV(2)).

It localises to the mitochondrion inner membrane. Its function is as follows. Component of the ubiquinol-cytochrome c oxidoreductase, a multisubunit transmembrane complex that is part of the mitochondrial electron transport chain which drives oxidative phosphorylation. The respiratory chain contains 3 multisubunit complexes succinate dehydrogenase (complex II, CII), ubiquinol-cytochrome c oxidoreductase (cytochrome b-c1 complex, complex III, CIII) and cytochrome c oxidase (complex IV, CIV), that cooperate to transfer electrons derived from NADH and succinate to molecular oxygen, creating an electrochemical gradient over the inner membrane that drives transmembrane transport and the ATP synthase. The cytochrome b-c1 complex catalyzes electron transfer from ubiquinol to cytochrome c, linking this redox reaction to translocation of protons across the mitochondrial inner membrane, with protons being carried across the membrane as hydrogens on the quinol. In the process called Q cycle, 2 protons are consumed from the matrix, 4 protons are released into the intermembrane space and 2 electrons are passed to cytochrome c. QCR10 has a role in CIII assembly and RIP1 stability. The sequence is that of Cytochrome b-c1 complex subunit 10 (UQCR11) from Bos taurus (Bovine).